We begin with the raw amino-acid sequence, 330 residues long: 2-alkyl-3-oxoalkanoate reductase (330 aa).

The Proton acceptor role is filled by Tyr-139. Lys-143 contributes to the NADP(+) binding site.

Belongs to the 3-beta-HSD family. Homodimer.

The catalysed reaction is a (2R,3S)-2-alkyl-3-hydroxyalkanoate + NADP(+) = an (R)-2-alkyl-3-oxoalkanoate + NADPH + H(+). Functionally, involved in olefin biosynthesis. Catalyzes the reversible stereospecific NADPH-dependent reduction of 2-alkyl-3-oxoalkanoic acids to 2-alkyl-3-hydroxyalkanoic acids. In the oxidative direction, syn-2-decyl-3-hydroxytetradecanoic acid is the preferred substrate. In the reductive direction, (2R/S)-2-hexyl-3-ketodecanoic acid is accepted as substrate. The sequence is that of 2-alkyl-3-oxoalkanoate reductase from Stenotrophomonas maltophilia (strain K279a).